The primary structure comprises 77 residues: Large ribosomal subunit protein uL29 (77 aa).

This sequence belongs to the universal ribosomal protein uL29 family.

This chain is Large ribosomal subunit protein uL29, found in Cutibacterium acnes (strain DSM 16379 / KPA171202) (Propionibacterium acnes).